The following is a 336-amino-acid chain: Fructose-1,6-bisphosphatase class 1 (336 aa).

Residues Glu92, Asp115, Leu117, and Asp118 each contribute to the Mg(2+) site. Substrate-binding positions include 118 to 121 (DGSS), Asn211, Tyr244, 262 to 264 (YLY), and Lys274. Glu280 lines the Mg(2+) pocket.

The protein belongs to the FBPase class 1 family. In terms of assembly, homotetramer. Mg(2+) is required as a cofactor.

It is found in the cytoplasm. The enzyme catalyses beta-D-fructose 1,6-bisphosphate + H2O = beta-D-fructose 6-phosphate + phosphate. The protein operates within carbohydrate biosynthesis; gluconeogenesis. This Vibrio atlanticus (strain LGP32) (Vibrio splendidus (strain Mel32)) protein is Fructose-1,6-bisphosphatase class 1.